A 127-amino-acid chain; its full sequence is Major sperm protein 63 (127 aa).

A2 is modified (N-acetylalanine). The 118-residue stretch at 9 to 126 (DIQTQPGTKI…RRKNLPIEYN (118 aa)) folds into the MSP domain.

Sperm.

The protein localises to the cell projection. Its subcellular location is the pseudopodium. It is found in the cytoplasm. It localises to the cytoskeleton. Its function is as follows. Central component in molecular interactions underlying sperm crawling. Forms an extensive filament system that extends from sperm villipoda, along the leading edge of the pseudopod. The sequence is that of Major sperm protein 63 (msp-63) from Caenorhabditis elegans.